Reading from the N-terminus, the 234-residue chain is Membrane glycoprotein RL11 (234 aa).

The N-terminal stretch at 1-23 (MQTYSTPLTLIIVTSLFLFTTQG) is a signal peptide. A helical membrane pass occupies residues 183–203 (LHCAWVSGLMIFVGALVICFL).

It is found in the host membrane. This Human cytomegalovirus (strain Merlin) (HHV-5) protein is Membrane glycoprotein RL11 (RL11).